Reading from the N-terminus, the 484-residue chain is Probable glycine dehydrogenase (decarboxylating) subunit 2 (484 aa).

N6-(pyridoxal phosphate)lysine is present on lysine 264.

It belongs to the GcvP family. C-terminal subunit subfamily. The glycine cleavage system is composed of four proteins: P, T, L and H. In this organism, the P 'protein' is a heterodimer of two subunits. It depends on pyridoxal 5'-phosphate as a cofactor.

The enzyme catalyses N(6)-[(R)-lipoyl]-L-lysyl-[glycine-cleavage complex H protein] + glycine + H(+) = N(6)-[(R)-S(8)-aminomethyldihydrolipoyl]-L-lysyl-[glycine-cleavage complex H protein] + CO2. Its function is as follows. The glycine cleavage system catalyzes the degradation of glycine. The P protein binds the alpha-amino group of glycine through its pyridoxal phosphate cofactor; CO(2) is released and the remaining methylamine moiety is then transferred to the lipoamide cofactor of the H protein. This is Probable glycine dehydrogenase (decarboxylating) subunit 2 from Legionella pneumophila subsp. pneumophila (strain Philadelphia 1 / ATCC 33152 / DSM 7513).